Consider the following 146-residue polypeptide: Large ribosomal subunit protein uL15x (146 aa).

Composition is skewed to basic residues over residues 1–14 and 21–30; these read MTTR…KRGH and RIGKHRKHPG. Positions 1–35 are disordered; sequence MTTRFKKNRKKRGHVSAGHGRIGKHRKHPGGRGNA.

The protein belongs to the universal ribosomal protein uL15 family.

The sequence is that of Large ribosomal subunit protein uL15x (RPL27AC) from Arabidopsis thaliana (Mouse-ear cress).